The primary structure comprises 238 residues: RNA-binding protein pno1 (238 aa).

In terms of domain architecture, KH spans 162 to 211; sequence QSRAIGRLAGKGGRTKFTIENVTKTRIVLADSKIHILGSYQNIQLARRAI.

Belongs to the PNO1 family.

The protein resides in the nucleus. The protein localises to the nucleolus. The sequence is that of RNA-binding protein pno1 (l(1)G0004) from Drosophila pseudoobscura pseudoobscura (Fruit fly).